Consider the following 403-residue polypeptide: Metacaspase-1 (403 aa).

Residues 1 to 95 (MFPGSGHNTY…PSGSQSFGQN (95 aa)) are disordered. Residues 13–22 (YPPPQGPPPN) are compositionally biased toward pro residues. Composition is skewed to low complexity over residues 23–34 (NNGYNSGPNNSY) and 49–62 (QYDQ…QSQP). Residues histidine 193 and cysteine 249 contribute to the active site.

The protein belongs to the peptidase C14B family.

Functionally, involved in cell death (apoptosis). This is Metacaspase-1 (MCA1) from Scheffersomyces stipitis (strain ATCC 58785 / CBS 6054 / NBRC 10063 / NRRL Y-11545) (Yeast).